The chain runs to 326 residues: MKKTTLALGMHDKLFKRARTMYQIEHCICDLLMTKGFLRIETPTLEHFEVFSDVVDNGNYNFFDKNGDLISLRPDITSQIGRVIASTQVHTPIKFSYSGKVFNYNEEMRGLSNEHTQAGVEIIGFPVHQALEEAVISAKEALDVAGVRNYKFEFSHAQLLQLIFEELNLPAVKEAELATYIRDKSITGLKEFTKENPSQYDKVLEQLPSLFGETTAVLTEARQLTDNESFLTALDSLEVLTSRLADNLPETTLDLAQLPAVPYYTGIMFKVFGDKVPDAFVSGGRYDKLFERFGATELTAVGWAIDIDSVYQAVHDDVEFGGDMDD.

This sequence belongs to the class-II aminoacyl-tRNA synthetase family. HisZ subfamily. In terms of assembly, heteromultimer composed of HisG and HisZ subunits.

Its subcellular location is the cytoplasm. It participates in amino-acid biosynthesis; L-histidine biosynthesis; L-histidine from 5-phospho-alpha-D-ribose 1-diphosphate: step 1/9. Functionally, required for the first step of histidine biosynthesis. May allow the feedback regulation of ATP phosphoribosyltransferase activity by histidine. The polypeptide is ATP phosphoribosyltransferase regulatory subunit (Streptococcus thermophilus (strain ATCC BAA-491 / LMD-9)).